A 210-amino-acid chain; its full sequence is 7-carboxy-7-deazaguanine synthase (210 aa).

Residues 12-14 (LQG) and Arg-27 each bind substrate. In terms of domain architecture, Radical SAM core spans 18 to 210 (HAGRASVFCR…VQTHKSLGIR (193 aa)). The [4Fe-4S] cluster site is built by Cys-31, Cys-46, and Cys-49. Thr-51 is a Mg(2+) binding site. Thr-90 lines the substrate pocket. S-adenosyl-L-methionine is bound by residues Gly-92, 133 to 135 (SPK), and 173 to 176 (QPMD).

This sequence belongs to the radical SAM superfamily. 7-carboxy-7-deazaguanine synthase family. In terms of assembly, homodimer. [4Fe-4S] cluster is required as a cofactor. The cofactor is S-adenosyl-L-methionine. Requires Mg(2+) as cofactor.

It catalyses the reaction 6-carboxy-5,6,7,8-tetrahydropterin + H(+) = 7-carboxy-7-deazaguanine + NH4(+). It participates in purine metabolism; 7-cyano-7-deazaguanine biosynthesis. Catalyzes the complex heterocyclic radical-mediated conversion of 6-carboxy-5,6,7,8-tetrahydropterin (CPH4) to 7-carboxy-7-deazaguanine (CDG), a step common to the biosynthetic pathways of all 7-deazapurine-containing compounds. The sequence is that of 7-carboxy-7-deazaguanine synthase from Bradyrhizobium diazoefficiens (strain JCM 10833 / BCRC 13528 / IAM 13628 / NBRC 14792 / USDA 110).